The primary structure comprises 286 residues: Aquaporin NIP1-3 (286 aa).

Residues 1–44 (MAGGEHGVNGQHEETRAMEEGSRDHQARCENSEQDGGSKSSSNN) form a disordered region. Residues 11–31 (QHEETRAMEEGSRDHQARCEN) show a composition bias toward basic and acidic residues. Positions 34 to 44 (QDGGSKSSSNN) are enriched in polar residues. The next 2 membrane-spanning stretches (helical) occupy residues 56–76 (VIAE…AVAV) and 84–104 (VTFP…VYSV). The NPA 1 signature appears at 113–115 (NPA). The next 3 helical transmembrane spans lie at 131 to 153 (VPAY…RALF), 172 to 192 (SLAM…GVAT), and 200 to 220 (LAGL…GPIS). The NPA 2 signature appears at 225-227 (NPA). Residues 239–259 (YTGIWVYIAGPVFGAVAGAWA) form a helical membrane-spanning segment.

This sequence belongs to the MIP/aquaporin (TC 1.A.8) family. NIP (TC 1.A.8.12) subfamily.

The protein localises to the membrane. Its function is as follows. Aquaporins facilitate the transport of water and small neutral solutes across cell membranes. This chain is Aquaporin NIP1-3 (NIP1-3), found in Oryza sativa subsp. japonica (Rice).